The primary structure comprises 149 residues: Large ribosomal subunit protein bL9 (149 aa).

It belongs to the bacterial ribosomal protein bL9 family.

Binds to the 23S rRNA. The polypeptide is Large ribosomal subunit protein bL9 (Laribacter hongkongensis (strain HLHK9)).